The primary structure comprises 895 residues: Pentatricopeptide repeat-containing protein At1g74600, chloroplastic (895 aa).

Residues 1-71 constitute a chloroplast transit peptide; it reads MNCLANESLN…CNLRTTKILQ (71 aa). PPR repeat units follow at residues 83 to 113, 114 to 148, 149 to 183, 184 to 214, 215 to 249, 250 to 280, 284 to 314, 315 to 349, 350 to 384, 385 to 415, 417 to 451, 452 to 483, 484 to 514, 515 to 549, 550 to 584, 585 to 615, 616 to 650, 651 to 685, 686 to 716, 717 to 751, 752 to 787, and 788 to 818; these read DVFLTKSLLSWYSNSGSMADAAKLFDTIPQP, DVVSCNIMISGYKQHRLFEESLRFFSKMHFLGFEA, NEISYGSVISACSALQAPLFSELVCCHTIKMGYFF, YEVVESALIDVFSKNLRFEDAYKVFRDSLSA, NVYCWNTIIAGALRNQNYGAVFDLFHEMCVGFQKP, DSYTYSSVLAACASLEKLRFGKVVQARVIKC, DVFVCTAIVDLYAKCGHMAEAMEVFSRIPNP, SVVSWTVMLSGYTKSNDAFSALEIFKEMRHSGVEI, NNCTVTSVISACGRPSMVCEASQVHAWVFKSGFYL, DSSVAAALISMYSKSGDIDLSEQVFEDLDDI, RQNIVNVMITSFSQSKKPGKAIRLFTRMLQEGLRT, DEFSVCSLLSVLDCLNLGKQVHGYTLKSGLVL, DLTVGSSLFTLYSKCGSLEESYKLFQGIPFK, DNACWASMISGFNEYGYLREAIGLFSEMLDDGTSP, DESTLAAVLTVCSSHPSLPRGKEIHGYTLRAGIDK, GMDLGSALVNMYSKCGSLKLARQVYDRLPEL, DPVSCSSLISGYSQHGLIQDGFLLFRDMVMSGFTM, DSFAISSILKAAALSDESSLGAQVHAYITKIGLCT, EPSVGSSLLTMYSKFGSIDDCCKAFSQINGP, DLIAWTALIASYAQHGKANEALQVYNLMKEKGFKP, DKVTFVGVLSACSHGGLVEESYFHLNSMVKDYGIEP, and ENRHYVCMVDALGRSGRLREAESFINNMHIK. The segment at 824 to 895 is type E motif; degenerate; sequence WGTLLAACKI…VQKEPGWSSV (72 aa).

It belongs to the PPR family. PCMP-E subfamily.

The protein localises to the plastid. Its subcellular location is the chloroplast. This is Pentatricopeptide repeat-containing protein At1g74600, chloroplastic (PCMP-E69) from Arabidopsis thaliana (Mouse-ear cress).